A 354-amino-acid chain; its full sequence is GTPase Obg (354 aa).

Residues 1 to 159 enclose the Obg domain; that stretch reads MKFVDEVKIH…RDLVLELKLL (159 aa). The region spanning 160–333 is the OBG-type G domain; it reads ADVGIVGYPN…LLDAVGRALF (174 aa). GTP-binding positions include 166–173, 191–195, 212–215, 283–286, and 314–316; these read GYPNAGKS, FTTLT, DIPG, TKID, and SAV. S173 and T193 together coordinate Mg(2+).

Belongs to the TRAFAC class OBG-HflX-like GTPase superfamily. OBG GTPase family. In terms of assembly, monomer. Mg(2+) serves as cofactor.

The protein resides in the cytoplasm. Functionally, an essential GTPase which binds GTP, GDP and possibly (p)ppGpp with moderate affinity, with high nucleotide exchange rates and a fairly low GTP hydrolysis rate. Plays a role in control of the cell cycle, stress response, ribosome biogenesis and in those bacteria that undergo differentiation, in morphogenesis control. The sequence is that of GTPase Obg from Anaeromyxobacter sp. (strain K).